A 542-amino-acid chain; its full sequence is Phosphoenolpyruvate carboxykinase (ATP) (542 aa).

Substrate-binding residues include Arg-67, Tyr-208, and Lys-214. Residues Lys-214, His-233, and 249-257 (GLSGTGKTT) each bind ATP. Residues Lys-214 and His-233 each contribute to the Mn(2+) site. Residue Asp-270 participates in Mn(2+) binding. ATP is bound by residues Glu-298, Arg-334, 450 to 451 (RI), and Thr-456. Arg-334 contacts substrate.

The protein belongs to the phosphoenolpyruvate carboxykinase (ATP) family. As to quaternary structure, monomer. Mn(2+) serves as cofactor.

Its subcellular location is the cytoplasm. It carries out the reaction oxaloacetate + ATP = phosphoenolpyruvate + ADP + CO2. Its pathway is carbohydrate biosynthesis; gluconeogenesis. Involved in the gluconeogenesis. Catalyzes the conversion of oxaloacetate (OAA) to phosphoenolpyruvate (PEP) through direct phosphoryl transfer between the nucleoside triphosphate and OAA. The protein is Phosphoenolpyruvate carboxykinase (ATP) of Vibrio vulnificus (strain CMCP6).